Consider the following 721-residue polypeptide: Far upstream element-binding protein 2 (721 aa).

Positions 1-148 (MSDYSTGGPP…HPPPRTSMTE (148 aa)) are disordered. N-acetylserine is present on S2. A compositionally biased stretch (pro residues) spans 8-17 (GPPPGPPPPA). 2 stretches are compositionally biased toward gly residues: residues 18 to 28 (GGGGGAAGAGG) and 36 to 69 (GAGD…GGPG). At R40 the chain carries Omega-N-methylarginine. K88 carries the post-translational modification N6-acetyllysine. At T101 the chain carries Phosphothreonine. Positions 111–123 (RQLEDGDQPDSKK) are enriched in basic and acidic residues. K122 participates in a covalent cross-link: Glycyl lysine isopeptide (Lys-Gly) (interchain with G-Cter in SUMO1); alternate. A Glycyl lysine isopeptide (Lys-Gly) (interchain with G-Cter in SUMO2); alternate cross-link involves residue K122. A phosphoserine mark is found at S126, S130, S182, S185, S194, and S275. KH domains are found at residues 145–209 (SMTE…KMML), 234–300 (GTVQ…CEMV), and 323–387 (GGGI…ARII). The segment at 394 to 422 (LRSGPPGPPGAPGMPPGGRGRGRGQGNWG) is disordered. The segment covering 398 to 408 (PPGPPGAPGMP) has biased composition (pro residues). Positions 409–422 (PGGRGRGRGQGNWG) are enriched in gly residues. Omega-N-methylarginine is present on residues R412, R414, R416, and R443. Positions 425–492 (GGEMTFSIPT…QQIDHAKQLI (68 aa)) constitute a KH 4 domain. A Phosphoserine modification is found at S481. Residues 498 to 570 (GPLCPVGPGP…HDPNKAAAAA (73 aa)) are disordered. Pro residues-rich tracts occupy residues 502–521 (PVGP…PFHP) and 529–543 (PGAP…PHQY). The stretch at 572 to 583 (DPNAAWAAYYSH) is repeat 1. Residues 572 to 685 (DPNAAWAAYY…SAAWAEYYRQ (114 aa)) are 4 X 12 AA imperfect repeats. Residues 588-614 (PPGPVPGPAPAPAAPPAQGEPPQPPPT) are compositionally biased toward pro residues. Disordered stretches follow at residues 588–650 (PPGP…KAWE), 659–678 (VATG…YSAA), and 688–721 (AYYG…ELHL). Tandem repeats lie at residues 618–629 (DYTKAWEEYYKK), 644–655 (DYTKAWEEYYKK), and 674–685 (DYSAAWAEYYRQ).

This sequence belongs to the KHSRP family. As to quaternary structure, part of a ternary complex containing FUBP2, PTBP1, PTBP2 and HNRPH1. Interacts with PARN. Interacts with PQBP1.

It is found in the nucleus. It localises to the cytoplasm. Part of a ternary complex that binds to the downstream control sequence (DCS) of the pre-mRNA. Mediates exon inclusion in transcripts that are subject to tissue-specific alternative splicing. May interact with single-stranded DNA from the far-upstream element (FUSE). May activate gene expression. Also involved in degradation of inherently unstable mRNAs that contain AU-rich elements (AREs) in their 3'-UTR, possibly by recruiting degradation machinery to ARE-containing mRNAs. Binds to the dendritic targeting element and may play a role in mRNA trafficking. This Rattus norvegicus (Rat) protein is Far upstream element-binding protein 2 (Khsrp).